Reading from the N-terminus, the 429-residue chain is UDP-glucuronate 4-epimerase 1 (429 aa).

2 consecutive transmembrane segments (helical) span residues 36–56 (FLWA…QSFV) and 87–107 (GISV…SLAL). 89-120 (SVLVTGATGFVGSHVSLALRKRGDGVVGLDNF) serves as a coordination point for NAD(+). Y239 serves as the catalytic Proton acceptor.

Belongs to the NAD(P)-dependent epimerase/dehydratase family. In terms of assembly, homodimer. In root stele, leaves, siliques, flowers, pollen and stems.

The protein resides in the golgi apparatus. It localises to the golgi stack membrane. It catalyses the reaction UDP-alpha-D-glucuronate = UDP-alpha-D-galacturonate. Its activity is regulated as follows. Inhibited by UDP-Xylose. Its function is as follows. UDP-D-glucuronate 4-epimerase involved in the synthesis of the negatively charged monosaccharide that forms the backbone of pectic cell wall components. In Arabidopsis thaliana (Mouse-ear cress), this protein is UDP-glucuronate 4-epimerase 1 (GAE1).